The sequence spans 464 residues: ATP synthase subunit beta (464 aa).

153–160 lines the ATP pocket; it reads GGAGVGKT.

Belongs to the ATPase alpha/beta chains family. In terms of assembly, F-type ATPases have 2 components, CF(1) - the catalytic core - and CF(0) - the membrane proton channel. CF(1) has five subunits: alpha(3), beta(3), gamma(1), delta(1), epsilon(1). CF(0) has three main subunits: a(1), b(2) and c(9-12). The alpha and beta chains form an alternating ring which encloses part of the gamma chain. CF(1) is attached to CF(0) by a central stalk formed by the gamma and epsilon chains, while a peripheral stalk is formed by the delta and b chains.

The protein resides in the cell inner membrane. The catalysed reaction is ATP + H2O + 4 H(+)(in) = ADP + phosphate + 5 H(+)(out). Its function is as follows. Produces ATP from ADP in the presence of a proton gradient across the membrane. The catalytic sites are hosted primarily by the beta subunits. The protein is ATP synthase subunit beta of Burkholderia vietnamiensis (strain G4 / LMG 22486) (Burkholderia cepacia (strain R1808)).